A 1073-amino-acid polypeptide reads, in one-letter code: Carbamoyl phosphate synthase large chain (1073 aa).

Residues 2-403 form a carboxyphosphate synthetic domain region; that stretch reads PKRTDIKSIL…SLQKALRGLE (402 aa). Positions 129, 169, 175, 176, 208, 210, 215, 241, 242, 243, 285, and 299 each coordinate ATP. The ATP-grasp 1 domain occupies 133–328; it reads DVAMKKIGLE…IAKVAAKLAV (196 aa). Mg(2+)-binding residues include Gln-285, Glu-299, and Asn-301. 3 residues coordinate Mn(2+): Gln-285, Glu-299, and Asn-301. The segment at 404–553 is oligomerization domain; it reads VGATGFDPKV…YSTYEEECEA (150 aa). Residues 554-936 are carbamoyl phosphate synthetic domain; that stretch reads NPSTDREKIM…AFAKAQLGSN (383 aa). The ATP-grasp 2 domain maps to 679-870; the sequence is QHAVDRLKLK…LAKVAARVMA (192 aa). Residues Arg-715, His-754, Leu-756, Glu-761, Gly-786, Val-787, His-788, Ser-789, Gln-829, and Glu-841 each coordinate ATP. Gln-829, Glu-841, and Asn-843 together coordinate Mg(2+). Mn(2+) contacts are provided by Gln-829, Glu-841, and Asn-843. An MGS-like domain is found at 937 to 1073; it reads STMKKHGRAL…SVQEMHAQIK (137 aa). The allosteric domain stretch occupies residues 937-1073; that stretch reads STMKKHGRAL…SVQEMHAQIK (137 aa).

Belongs to the CarB family. In terms of assembly, composed of two chains; the small (or glutamine) chain promotes the hydrolysis of glutamine to ammonia, which is used by the large (or ammonia) chain to synthesize carbamoyl phosphate. Tetramer of heterodimers (alpha,beta)4. Mg(2+) is required as a cofactor. It depends on Mn(2+) as a cofactor.

It carries out the reaction hydrogencarbonate + L-glutamine + 2 ATP + H2O = carbamoyl phosphate + L-glutamate + 2 ADP + phosphate + 2 H(+). It catalyses the reaction hydrogencarbonate + NH4(+) + 2 ATP = carbamoyl phosphate + 2 ADP + phosphate + 2 H(+). Its pathway is amino-acid biosynthesis; L-arginine biosynthesis; carbamoyl phosphate from bicarbonate: step 1/1. The protein operates within pyrimidine metabolism; UMP biosynthesis via de novo pathway; (S)-dihydroorotate from bicarbonate: step 1/3. Functionally, large subunit of the glutamine-dependent carbamoyl phosphate synthetase (CPSase). CPSase catalyzes the formation of carbamoyl phosphate from the ammonia moiety of glutamine, carbonate, and phosphate donated by ATP, constituting the first step of 2 biosynthetic pathways, one leading to arginine and/or urea and the other to pyrimidine nucleotides. The large subunit (synthetase) binds the substrates ammonia (free or transferred from glutamine from the small subunit), hydrogencarbonate and ATP and carries out an ATP-coupled ligase reaction, activating hydrogencarbonate by forming carboxy phosphate which reacts with ammonia to form carbamoyl phosphate. This is Carbamoyl phosphate synthase large chain from Escherichia coli O157:H7.